We begin with the raw amino-acid sequence, 443 residues long: Ribulose bisphosphate carboxylase large chain (443 aa).

N89 and T139 together coordinate substrate. K141 acts as the Proton acceptor in catalysis. Residue K143 participates in substrate binding. Positions 167, 169, and 170 each coordinate Mg(2+). The residue at position 167 (K167) is an N6-carboxylysine. H260 acts as the Proton acceptor in catalysis. The substrate site is built by R261, H293, and S345.

Belongs to the RuBisCO large chain family. Type I subfamily. In terms of assembly, heterohexadecamer of 8 large chains and 8 small chains; disulfide-linked. The disulfide link is formed within the large subunit homodimers. Mg(2+) is required as a cofactor. In terms of processing, the disulfide bond which can form in the large chain dimeric partners within the hexadecamer appears to be associated with oxidative stress and protein turnover.

The protein resides in the plastid. It is found in the chloroplast. It catalyses the reaction 2 (2R)-3-phosphoglycerate + 2 H(+) = D-ribulose 1,5-bisphosphate + CO2 + H2O. The catalysed reaction is D-ribulose 1,5-bisphosphate + O2 = 2-phosphoglycolate + (2R)-3-phosphoglycerate + 2 H(+). Its function is as follows. RuBisCO catalyzes two reactions: the carboxylation of D-ribulose 1,5-bisphosphate, the primary event in carbon dioxide fixation, as well as the oxidative fragmentation of the pentose substrate in the photorespiration process. Both reactions occur simultaneously and in competition at the same active site. In Antirrhinum majus (Garden snapdragon), this protein is Ribulose bisphosphate carboxylase large chain.